Consider the following 111-residue polypeptide: Prothymosin alpha (111 aa).

Met-1 carries the post-translational modification N-acetylmethionine. A disordered region spans residues 1 to 111 (MSDAAVDTSS…TKKQKTDEDD (111 aa)). N-acetylserine; in Prothymosin alpha, N-terminally processed is present on Ser-2. The residue at position 2 (Ser-2) is a Phosphoserine. At Thr-8 the chain carries Phosphothreonine. Phosphoserine occurs at positions 9 and 10. 2 positions are modified to phosphothreonine: Thr-13 and Thr-14. Basic and acidic residues predominate over residues 13 to 31 (TTKDLKEKKEVVEEAENGR). Lys-15 is subject to N6-acetyllysine; alternate. Lys-15 carries the N6-succinyllysine; alternate modification. Acidic residues predominate over residues 40–84 (ENEENGEQEADNEVDEEEEEGGEEEEEEEEGDGEEEDGDEDEEAE). Over residues 101-111 (DTKKQKTDEDD) the composition is skewed to basic and acidic residues. Thr-102 is modified (phosphothreonine). Residue Lys-103 is modified to N6-acetyllysine; alternate. Lys-103 is covalently cross-linked (Glycyl lysine isopeptide (Lys-Gly) (interchain with G-Cter in SUMO2); alternate). Thr-107 is modified (phosphothreonine).

This sequence belongs to the pro/parathymosin family. In terms of assembly, interacts with NUPR1; regulates apoptotic process. In terms of processing, covalently linked to a small RNA of about 20 nucleotides.

It localises to the nucleus. Functionally, prothymosin alpha may mediate immune function by conferring resistance to certain opportunistic infections. This chain is Prothymosin alpha (PTMA), found in Homo sapiens (Human).